A 162-amino-acid polypeptide reads, in one-letter code: UPF0114 protein PA4574 (162 aa).

3 consecutive transmembrane segments (helical) span residues 10–32 (YASR…ALTI), 53–75 (LILV…MVMI), and 136–156 (LMWY…MGYL).

The protein belongs to the UPF0114 family.

Its subcellular location is the cell membrane. The protein is UPF0114 protein PA4574 of Pseudomonas aeruginosa (strain ATCC 15692 / DSM 22644 / CIP 104116 / JCM 14847 / LMG 12228 / 1C / PRS 101 / PAO1).